The following is a 263-amino-acid chain: Acyl-[acyl-carrier-protein]--UDP-N-acetylglucosamine O-acyltransferase (263 aa).

Belongs to the transferase hexapeptide repeat family. LpxA subfamily. In terms of assembly, homotrimer.

It localises to the cytoplasm. It catalyses the reaction a (3R)-hydroxyacyl-[ACP] + UDP-N-acetyl-alpha-D-glucosamine = a UDP-3-O-[(3R)-3-hydroxyacyl]-N-acetyl-alpha-D-glucosamine + holo-[ACP]. It functions in the pathway glycolipid biosynthesis; lipid IV(A) biosynthesis; lipid IV(A) from (3R)-3-hydroxytetradecanoyl-[acyl-carrier-protein] and UDP-N-acetyl-alpha-D-glucosamine: step 1/6. Its function is as follows. Involved in the biosynthesis of lipid A, a phosphorylated glycolipid that anchors the lipopolysaccharide to the outer membrane of the cell. This Campylobacter jejuni subsp. jejuni serotype O:6 (strain 81116 / NCTC 11828) protein is Acyl-[acyl-carrier-protein]--UDP-N-acetylglucosamine O-acyltransferase.